The chain runs to 414 residues: 2,3-diketo-5-methylthiopentyl-1-phosphate enolase (414 aa).

The active-site Proton acceptor is Lys99. Substrate contacts are provided by residues Lys148, 174 to 177 (KDDE), His265, Gly338, and 360 to 361 (GG). Positions 174, 176, and 177 each coordinate Mg(2+). The residue at position 174 (Lys174) is an N6-carboxylysine.

It belongs to the RuBisCO large chain family. Type IV subfamily. Homodimer. Requires Mg(2+) as cofactor.

It carries out the reaction 5-methylsulfanyl-2,3-dioxopentyl phosphate = 2-hydroxy-5-methylsulfanyl-3-oxopent-1-enyl phosphate. Its pathway is amino-acid biosynthesis; L-methionine biosynthesis via salvage pathway; L-methionine from S-methyl-5-thio-alpha-D-ribose 1-phosphate: step 3/6. In terms of biological role, catalyzes the enolization of 2,3-diketo-5-methylthiopentyl-1-phosphate (DK-MTP-1-P) into 2-hydroxy-3-keto-5-methylthiopentenyl-1-phosphate (HK-MTPenyl-1-P). This is 2,3-diketo-5-methylthiopentyl-1-phosphate enolase from Bacillus cereus (strain Q1).